The primary structure comprises 387 residues: Probable tRNA sulfurtransferase (387 aa).

The THUMP domain maps to Ser67–Ser167. ATP-binding positions include Leu185–Leu186, Thr210–Phe211, Arg269, Gly287, and Gln296.

Belongs to the ThiI family.

The protein localises to the cytoplasm. It carries out the reaction [ThiI sulfur-carrier protein]-S-sulfanyl-L-cysteine + a uridine in tRNA + 2 reduced [2Fe-2S]-[ferredoxin] + ATP + H(+) = [ThiI sulfur-carrier protein]-L-cysteine + a 4-thiouridine in tRNA + 2 oxidized [2Fe-2S]-[ferredoxin] + AMP + diphosphate. It catalyses the reaction [ThiS sulfur-carrier protein]-C-terminal Gly-Gly-AMP + S-sulfanyl-L-cysteinyl-[cysteine desulfurase] + AH2 = [ThiS sulfur-carrier protein]-C-terminal-Gly-aminoethanethioate + L-cysteinyl-[cysteine desulfurase] + A + AMP + 2 H(+). Its pathway is cofactor biosynthesis; thiamine diphosphate biosynthesis. Catalyzes the ATP-dependent transfer of a sulfur to tRNA to produce 4-thiouridine in position 8 of tRNAs, which functions as a near-UV photosensor. Also catalyzes the transfer of sulfur to the sulfur carrier protein ThiS, forming ThiS-thiocarboxylate. This is a step in the synthesis of thiazole, in the thiamine biosynthesis pathway. The sulfur is donated as persulfide by IscS. The chain is Probable tRNA sulfurtransferase from Mycoplasma pneumoniae (strain ATCC 29342 / M129 / Subtype 1) (Mycoplasmoides pneumoniae).